A 339-amino-acid polypeptide reads, in one-letter code: uncharacterized protein (339 aa).

The tract at residues 1-24 is disordered; it reads IQPARRHTKNTNMAKHTTKGTGHS. A compositionally biased stretch (polar residues) spans 10-21; that stretch reads NTNMAKHTTKGT.

It is found in the mitochondrion. This is an uncharacterized protein from Zea mays (Maize).